The chain runs to 92 residues: C-C motif chemokine 4 (92 aa).

The signal sequence occupies residues 1-23 (MKLCVTVLSLLVLVAAFCSPALS). 2 disulfide bridges follow: C34-C58 and C35-C74.

The protein belongs to the intercrine beta (chemokine CC) family. Homodimer. Interacts with CCR5.

Its subcellular location is the secreted. Functionally, monokine with inflammatory and chemokinetic properties. This chain is C-C motif chemokine 4 (CCL4), found in Canis lupus familiaris (Dog).